A 199-amino-acid chain; its full sequence is Peroxynitrite isomerase (199 aa).

Positions 20 to 26 (GVWEGSG) match the GXWXGXG motif. Heme b is bound by residues lysine 158 and histidine 190.

It belongs to the nitrobindin family. In terms of assembly, homodimer. The cofactor is heme b.

It carries out the reaction peroxynitrite = nitrate. It functions in the pathway nitrogen metabolism. In terms of biological role, heme-binding protein able to scavenge peroxynitrite and to protect free L-tyrosine against peroxynitrite-mediated nitration, by acting as a peroxynitrite isomerase that converts peroxynitrite to nitrate. Therefore, this protein likely plays a role in peroxynitrite sensing and in the detoxification of reactive nitrogen and oxygen species (RNS and ROS, respectively). Is able to bind nitric oxide (NO) in vitro, but may act as a sensor of peroxynitrite levels in vivo. In Clavibacter sepedonicus (Clavibacter michiganensis subsp. sepedonicus), this protein is Peroxynitrite isomerase.